Reading from the N-terminus, the 361-residue chain is Cysteine-rich with EGF-like domain protein 2-A (361 aa).

A signal peptide spans 1 to 24; it reads MNGSRALHLSAWLLLCLLCSAAVA. In terms of domain architecture, EGF-like 1 spans 134 to 176; sequence DCLACLGGSERPCHGNGFCNGDGTRSGDGLCRCEAEYTGPFCL. Disulfide bonds link C138–C152, C146–C164, and C166–C175. N-linked (GlcNAc...) asparagine glycosylation occurs at N188. FU repeat units follow at residues 191–238 and 251–298; these read YSLC…EESP and SFLC…SEQV. The region spanning 288-329 is the EGF-like 2; calcium-binding domain; the sequence is DVDECDASEQVCSRENETCLNTAGSYKCTCSEGFEDKEGNCV. 3 cysteine pairs are disulfide-bonded: C292-C306, C299-C315, and C317-C328. The N-linked (GlcNAc...) asparagine glycan is linked to N303. Residues 341 to 361 form a disordered region; sequence DGEMGTSASDINISNTAHEDL. A compositionally biased stretch (polar residues) spans 346–361; it reads TSASDINISNTAHEDL. The N-linked (GlcNAc...) asparagine glycan is linked to N352.

Belongs to the CRELD family.

It is found in the secreted. The protein resides in the endoplasmic reticulum. Its function is as follows. Possible role in neuronal acetylcholine receptor transport. The protein is Cysteine-rich with EGF-like domain protein 2-A (creld2-a) of Xenopus laevis (African clawed frog).